The chain runs to 273 residues: Ribosomal RNA small subunit methyltransferase A (273 aa).

Residues Asn-18, Leu-20, Gly-45, Glu-66, Asp-91, and Asn-113 each contribute to the S-adenosyl-L-methionine site.

The protein belongs to the class I-like SAM-binding methyltransferase superfamily. rRNA adenine N(6)-methyltransferase family. RsmA subfamily.

Its subcellular location is the cytoplasm. The enzyme catalyses adenosine(1518)/adenosine(1519) in 16S rRNA + 4 S-adenosyl-L-methionine = N(6)-dimethyladenosine(1518)/N(6)-dimethyladenosine(1519) in 16S rRNA + 4 S-adenosyl-L-homocysteine + 4 H(+). Its function is as follows. Specifically dimethylates two adjacent adenosines (A1518 and A1519) in the loop of a conserved hairpin near the 3'-end of 16S rRNA in the 30S particle. May play a critical role in biogenesis of 30S subunits. The protein is Ribosomal RNA small subunit methyltransferase A of Escherichia coli O139:H28 (strain E24377A / ETEC).